We begin with the raw amino-acid sequence, 405 residues long: MDHLPMPKFGPLAGLRVVFSGIEIAGPFAGQMFAEWGAEVIWIENVAWADTIRVQPNYPQLSRRNLHALSLNIFKDEGREAFLKLMETTDIFIEASKGPAFARRGITDEVLWQHNPKLVIAHLSGFGQYGTEEYTNLPAYNTIAQAFSGYLIQNGDVDQPMPAFPYTADYFSGLTATTAALAALHKVRETGKGESIDIAMYEVMLRMGQYFMMDYFNGGEMCPRMSKGKDPYYAGCGLYKCADGYIVMELVGITQIEECFKDIGLAHLLSTPEIPEGTQLIHRIECPYGPLVEEKLDAWLAAHTIAEVKERFAELNIACAKVLTVPELESNPQYVARESITQWQTMDGRTCKGPNIMPKFKNNPGQIWRGMPSHGMDTAAILKNIGYSENDIQELVSKGLAKVED.

Positions 97 and 104 each coordinate CoA. Catalysis depends on aspartate 169, which acts as the Nucleophile.

It belongs to the CoA-transferase III family. CaiB subfamily. Homodimer.

It localises to the cytoplasm. It carries out the reaction crotonobetainyl-CoA + (R)-carnitine = crotonobetaine + (R)-carnitinyl-CoA. It catalyses the reaction 4-(trimethylamino)butanoyl-CoA + (R)-carnitine = (R)-carnitinyl-CoA + 4-(trimethylamino)butanoate. Its pathway is amine and polyamine metabolism; carnitine metabolism. Its function is as follows. Catalyzes the reversible transfer of the CoA moiety from gamma-butyrobetainyl-CoA to L-carnitine to generate L-carnitinyl-CoA and gamma-butyrobetaine. Is also able to catalyze the reversible transfer of the CoA moiety from gamma-butyrobetainyl-CoA or L-carnitinyl-CoA to crotonobetaine to generate crotonobetainyl-CoA. In Escherichia coli (strain SE11), this protein is L-carnitine CoA-transferase.